Consider the following 302-residue polypeptide: Lipooligosaccharide biosynthesis protein lex-1 (302 aa).

Tandem repeats lie at residues Ser-42–Gln-45, Ser-46–Gln-49, Ser-50–Gln-53, Ser-54–Gln-57, Ser-58–Gln-61, Ser-62–Gln-65, and Ser-66–Gln-69. Residues Ser-42–Gln-69 form a 7 X 4 AA tandem repeats of S-I-N-Q region.

The protein belongs to the glycosyltransferase 25 family.

In terms of biological role, involved in extracellular lipooligosaccharide (LOS) biosynthesis and virulence expression. Involved in the synthesis of the oligosaccharide moiety of the LOS molecule by adding GalNAc. The polypeptide is Lipooligosaccharide biosynthesis protein lex-1 (lex1) (Haemophilus influenzae (strain ATCC 51907 / DSM 11121 / KW20 / Rd)).